The sequence spans 134 residues: D-ribose pyranase (134 aa).

Catalysis depends on histidine 20, which acts as the Proton donor. Substrate contacts are provided by residues aspartate 28, histidine 101, and 123–125 (YSN).

Belongs to the RbsD / FucU family. RbsD subfamily. Homodecamer.

The protein resides in the cytoplasm. It carries out the reaction beta-D-ribopyranose = beta-D-ribofuranose. It functions in the pathway carbohydrate metabolism; D-ribose degradation; D-ribose 5-phosphate from beta-D-ribopyranose: step 1/2. Functionally, catalyzes the interconversion of beta-pyran and beta-furan forms of D-ribose. The polypeptide is D-ribose pyranase (Pseudomonas entomophila (strain L48)).